We begin with the raw amino-acid sequence, 443 residues long: Ribosomal protein uS12 methylthiotransferase RimO (443 aa).

The 111-residue stretch at 10–120 folds into the MTTase N-terminal domain; that stretch reads PRVGFVSLGC…VVKAVHQHLP (111 aa). 6 residues coordinate [4Fe-4S] cluster: cysteine 19, cysteine 55, cysteine 84, cysteine 151, cysteine 155, and cysteine 158. The 239-residue stretch at 137 to 375 folds into the Radical SAM core domain; that stretch reads LTPAHYAYLK…DFQEDISTQR (239 aa). The region spanning 377-443 is the TRAM domain; the sequence is ERWIGRDITV…VHDLYARPLP (67 aa).

It belongs to the methylthiotransferase family. RimO subfamily. [4Fe-4S] cluster serves as cofactor.

The protein localises to the cytoplasm. The catalysed reaction is L-aspartate(89)-[ribosomal protein uS12]-hydrogen + (sulfur carrier)-SH + AH2 + 2 S-adenosyl-L-methionine = 3-methylsulfanyl-L-aspartate(89)-[ribosomal protein uS12]-hydrogen + (sulfur carrier)-H + 5'-deoxyadenosine + L-methionine + A + S-adenosyl-L-homocysteine + 2 H(+). In terms of biological role, catalyzes the methylthiolation of an aspartic acid residue of ribosomal protein uS12. This is Ribosomal protein uS12 methylthiotransferase RimO from Aromatoleum aromaticum (strain DSM 19018 / LMG 30748 / EbN1) (Azoarcus sp. (strain EbN1)).